The chain runs to 666 residues: Calpain-10 (666 aa).

One can recognise a Calpain catalytic domain in the interval 13-321 (LFRDAAFPAS…FDEVTIGYPV (309 aa)). Residues C73, H238, and N263 contribute to the active site. 2 domain III regions span residues 322–488 (TEAG…ISLS) and 507–648 (EWET…IHSQ).

This sequence belongs to the peptidase C2 family. In terms of tissue distribution, ubiquitous.

It localises to the cytoplasm. It is found in the nucleus. Calcium-regulated non-lysosomal thiol-protease which catalyzes limited proteolysis of substrates involved in cytoskeletal remodeling and signal transduction. May play a role in insulin-stimulated glucose uptake. The protein is Calpain-10 (Capn10) of Rattus norvegicus (Rat).